Here is a 208-residue protein sequence, read N- to C-terminus: Protein-L-isoaspartate O-methyltransferase (208 aa).

Serine 59 is a catalytic residue.

Belongs to the methyltransferase superfamily. L-isoaspartyl/D-aspartyl protein methyltransferase family.

It localises to the cytoplasm. It carries out the reaction [protein]-L-isoaspartate + S-adenosyl-L-methionine = [protein]-L-isoaspartate alpha-methyl ester + S-adenosyl-L-homocysteine. Catalyzes the methyl esterification of L-isoaspartyl residues in peptides and proteins that result from spontaneous decomposition of normal L-aspartyl and L-asparaginyl residues. It plays a role in the repair and/or degradation of damaged proteins. This is Protein-L-isoaspartate O-methyltransferase from Pectobacterium carotovorum subsp. carotovorum (strain PC1).